Reading from the N-terminus, the 433-residue chain is Trigger factor (433 aa).

Positions 166-251 (GDFAVIDFEG…LHEIQERAKP (86 aa)) constitute a PPIase FKBP-type domain.

Belongs to the FKBP-type PPIase family. Tig subfamily.

It is found in the cytoplasm. The enzyme catalyses [protein]-peptidylproline (omega=180) = [protein]-peptidylproline (omega=0). In terms of biological role, involved in protein export. Acts as a chaperone by maintaining the newly synthesized protein in an open conformation. Functions as a peptidyl-prolyl cis-trans isomerase. The polypeptide is Trigger factor (Aliarcobacter butzleri (strain RM4018) (Arcobacter butzleri)).